A 390-amino-acid polypeptide reads, in one-letter code: Transforming growth factor beta-1 proprotein (390 aa).

A signal peptide spans 1 to 29 (MPPSRLRLLPLLLPLLWLLVLAPGRPASG). The tract at residues 30-74 (LSTCKTIDMELVKRKRIEAIRGQILSKLRLASPPSQGDVPPGPLP) is straightjacket domain. Positions 75 to 271 (EAVLALYNST…ATPLERAQHL (197 aa)) are arm domain. N-linked (GlcNAc...) asparagine glycosylation is found at Asn82, Asn136, and Asn176. The interval 226-252 (DSKDNTLRVEINGIGPKRRGDLAAIHG) is bowtie tail. The Cell attachment site motif lies at 244 to 246 (RGD). 4 disulfide bridges follow: Cys285–Cys294, Cys293–Cys356, Cys322–Cys387, and Cys326–Cys389.

Belongs to the TGF-beta family. In terms of assembly, homodimer; disulfide-linked. Interacts with the serine proteases, HTRA1 and HTRA3: the interaction with either inhibits TGFB1-mediated signaling and the HTRA protease activity is required for this inhibition. May interact with THSD4; this interaction may lead to sequestration by FBN1 microfibril assembly and attenuation of TGFB signaling. Interacts with CD109, DPT and ASPN. Interacts with EFEMP2. Interacts with TSKU; the interaction contributes to regulation of the hair cycle. Interacts with TGFBR3. Homodimer; disulfide-linked. Interacts with transforming growth factor beta-1 (TGF-beta-1) chain; interaction is non-covalent and maintains TGF-beta-1 in a latent state; each latency-associated peptide (LAP) monomer interacts with TGF-beta-1 in the other monomer. Interacts with LTBP1; leading to regulation of TGF-beta-1 activation. Interacts with LRRC32/GARP; leading to regulation of TGF-beta-1 activation on the surface of activated regulatory T-cells (Tregs). Interacts with LRRC33/NRROS; leading to regulation of TGF-beta-1 in macrophages and microglia. Interacts (via cell attachment site) with integrins ITGAV and ITGB6 (ITGAV:ITGB6), leading to release of the active TGF-beta-1. Interacts with NREP; the interaction results in a decrease in TGFB1 autoinduction. Interacts with HSP90AB1; inhibits latent TGFB1 activation. As to quaternary structure, homodimer; disulfide-linked. Interacts with TGF-beta receptors (TGFBR1 and TGFBR2), leading to signal transduction. Post-translationally, transforming growth factor beta-1 proprotein: The precursor proprotein is cleaved in the Golgi apparatus by FURIN to form Transforming growth factor beta-1 (TGF-beta-1) and Latency-associated peptide (LAP) chains, which remain non-covalently linked, rendering TGF-beta-1 inactive. In terms of processing, N-glycosylated. Deglycosylation leads to activation of Transforming growth factor beta-1 (TGF-beta-1); mechanisms triggering deglycosylation-driven activation of TGF-beta-1 are however unclear.

The protein resides in the secreted. It is found in the extracellular space. The protein localises to the extracellular matrix. Functionally, transforming growth factor beta-1 proprotein: Precursor of the Latency-associated peptide (LAP) and Transforming growth factor beta-1 (TGF-beta-1) chains, which constitute the regulatory and active subunit of TGF-beta-1, respectively. Its function is as follows. Required to maintain the Transforming growth factor beta-1 (TGF-beta-1) chain in a latent state during storage in extracellular matrix. Associates non-covalently with TGF-beta-1 and regulates its activation via interaction with 'milieu molecules', such as LTBP1, LRRC32/GARP and LRRC33/NRROS, that control activation of TGF-beta-1. Interaction with LRRC33/NRROS regulates activation of TGF-beta-1 in macrophages and microglia. Interaction with LRRC32/GARP controls activation of TGF-beta-1 on the surface of activated regulatory T-cells (Tregs). Interaction with integrins (ITGAV:ITGB6 or ITGAV:ITGB8) results in distortion of the Latency-associated peptide chain and subsequent release of the active TGF-beta-1. In terms of biological role, multifunctional protein that regulates the growth and differentiation of various cell types and is involved in various processes, such as normal development, immune function, microglia function and responses to neurodegeneration. Activation into mature form follows different steps: following cleavage of the proprotein in the Golgi apparatus, Latency-associated peptide (LAP) and Transforming growth factor beta-1 (TGF-beta-1) chains remain non-covalently linked rendering TGF-beta-1 inactive during storage in extracellular matrix. At the same time, LAP chain interacts with 'milieu molecules', such as LTBP1, LRRC32/GARP and LRRC33/NRROS that control activation of TGF-beta-1 and maintain it in a latent state during storage in extracellular milieus. TGF-beta-1 is released from LAP by integrins (ITGAV:ITGB6 or ITGAV:ITGB8): integrin-binding to LAP stabilizes an alternative conformation of the LAP bowtie tail and results in distortion of the LAP chain and subsequent release of the active TGF-beta-1. Once activated following release of LAP, TGF-beta-1 acts by binding to TGF-beta receptors (TGFBR1 and TGFBR2), which transduce signal. While expressed by many cells types, TGF-beta-1 only has a very localized range of action within cell environment thanks to fine regulation of its activation by Latency-associated peptide chain (LAP) and 'milieu molecules'. Plays an important role in bone remodeling: acts as a potent stimulator of osteoblastic bone formation, causing chemotaxis, proliferation and differentiation in committed osteoblasts. Can promote either T-helper 17 cells (Th17) or regulatory T-cells (Treg) lineage differentiation in a concentration-dependent manner. At high concentrations, leads to FOXP3-mediated suppression of RORC and down-regulation of IL-17 expression, favoring Treg cell development. At low concentrations in concert with IL-6 and IL-21, leads to expression of the IL-17 and IL-23 receptors, favoring differentiation to Th17 cells. Stimulates sustained production of collagen through the activation of CREB3L1 by regulated intramembrane proteolysis (RIP). Mediates SMAD2/3 activation by inducing its phosphorylation and subsequent translocation to the nucleus. Positively regulates odontoblastic differentiation in dental papilla cells, via promotion of IPO7-mediated translocation of phosphorylated SMAD2 to the nucleus and subsequent transcription of target genes. Can induce epithelial-to-mesenchymal transition (EMT) and cell migration in various cell types. The polypeptide is Transforming growth factor beta-1 proprotein (TGFB1) (Cavia porcellus (Guinea pig)).